The sequence spans 769 residues: Serine protease HtrA-like (769 aa).

Basic residues predominate over residues 1–20; it reads MDIGKKHVIPKSQYRRKRRE. The disordered stretch occupies residues 1-390; it reads MDIGKKHVIP…ATSKLNKGRA (390 aa). Basic and acidic residues-rich tracts occupy residues 21 to 64 and 71 to 108; these read FFHN…ERFK and LEQR…DVSK. The segment covering 126–137 has biased composition (polar residues); the sequence is YEQNSEATLSTK. Over residues 138 to 186 the composition is skewed to basic and acidic residues; the sequence is STDKVESSDMRKLSPDKNKVGHEEQHVLSKPSEHDKETRIDFESSRTDS. Composition is skewed to polar residues over residues 202–221 and 247–262; these read GNES…NTVP and QQSQ…YGDS. A compositionally biased stretch (basic and acidic residues) spans 264-295; it reads QNDKSNHENDLSHHTPSKSDDKDNVMREDHIV. The segment covering 298-308 has biased composition (polar residues); that stretch reads NPDNDINTPSL. Basic and acidic residues predominate over residues 310–330; that stretch reads KIDDDRKLDEKIHVEDKHKQN. Over residues 331–347 the composition is skewed to polar residues; that stretch reads ADSSETVGYQSQSSVSH. Positions 348-362 are enriched in basic and acidic residues; that stretch reads RSTEKRNMAINDHHK. Positions 366-390 are enriched in polar residues; the sequence is QKLNTKTSANNNQKKATSKLNKGRA. Residues 410–430 form a helical membrane-spanning segment; sequence LVILMGIIILIVILNAIFNNV. Catalysis depends on charge relay system residues His-504, Asp-534, and Ser-619. The PDZ domain occupies 680–733; sequence IASLNSFERQAVKLPGKVKNGVVVDQVDNNGLADQSSLKKGDVITELDGKLLED.

This sequence belongs to the peptidase S1C family.

Its subcellular location is the cell membrane. In Staphylococcus aureus (strain bovine RF122 / ET3-1), this protein is Serine protease HtrA-like.